Reading from the N-terminus, the 135-residue chain is ATP synthase epsilon chain (135 aa).

Belongs to the ATPase epsilon chain family. As to quaternary structure, F-type ATPases have 2 components, CF(1) - the catalytic core - and CF(0) - the membrane proton channel. CF(1) has five subunits: alpha(3), beta(3), gamma(1), delta(1), epsilon(1). CF(0) has three main subunits: a, b and c.

The protein resides in the cell inner membrane. Its function is as follows. Produces ATP from ADP in the presence of a proton gradient across the membrane. The polypeptide is ATP synthase epsilon chain (Rhizobium etli (strain CIAT 652)).